The following is a 232-amino-acid chain: Pirin-like protein CC_1473 (232 aa).

Belongs to the pirin family.

The protein is Pirin-like protein CC_1473 of Caulobacter vibrioides (strain ATCC 19089 / CIP 103742 / CB 15) (Caulobacter crescentus).